The primary structure comprises 490 residues: UDP-N-acetylmuramate--L-alanine ligase (490 aa).

130–136 (GTHGKTT) is an ATP binding site.

It belongs to the MurCDEF family.

Its subcellular location is the cytoplasm. The enzyme catalyses UDP-N-acetyl-alpha-D-muramate + L-alanine + ATP = UDP-N-acetyl-alpha-D-muramoyl-L-alanine + ADP + phosphate + H(+). Its pathway is cell wall biogenesis; peptidoglycan biosynthesis. Cell wall formation. This is UDP-N-acetylmuramate--L-alanine ligase from Idiomarina loihiensis (strain ATCC BAA-735 / DSM 15497 / L2-TR).